The primary structure comprises 509 residues: MGNLSRARRVTAALGFIGLLFAVLGIIMIVMVPSIIKQQVLKNVRIDPNSLSFNMWKEIPVPFYLSVYFFNIVNPEGIIQGQKPQVQEHGPYVYREFRHKSNITFNNNDTVSFLEYRSYQFQPDKSRGQESDYIVMPNILVLSASMMMENRPGLLKLMMTLAFSTLGQRAFMNRTVGEIMWGYDDPLIHLINQYFPNSLPFKGKFGLFAELNNSDSGLFTVFTGVKNFSRIHLVDKWNGVSKVNYWHSDQCNMINGTSGQMWAPFMTPESSLEFYSPEACRSMKLVYKEQGVFGGIPTFRFVAPSTLFANGSVYPPNEGFCPCRESGIQNVSTCRFNAPLFLSHPHFYNADPVLAEAVSGLHPNPKEHSLFLDIHPVTGIPMNCSVKLQLSLFVKSVKGIGQTGNIQPVVLPLMWFEESGAMEGETLETFYIQLVLMPKVLHYAQYVLLALGCVLLLIPIIYQIRSQEKCYLFWISFKKGSKDKEAVQAYSEFLMTSAPKGTVLQEARL.

At 1 to 11 (MGNLSRARRVT) the chain is on the cytoplasmic side. A helical transmembrane segment spans residues 12–32 (AALGFIGLLFAVLGIIMIVMV). Over 33–440 (PSIIKQQVLK…YIQLVLMPKV (408 aa)) the chain is Extracellular. 9 N-linked (GlcNAc...) asparagine glycosylation sites follow: Asn-102, Asn-108, Asn-173, Asn-212, Asn-227, Asn-255, Asn-310, Asn-330, and Asn-383. Residues Cys-251 and Cys-384 are joined by a disulfide bond. The chain crosses the membrane as a helical span at residues 441–461 (LHYAQYVLLALGCVLLLIPII). Residues 462–509 (YQIRSQEKCYLFWISFKKGSKDKEAVQAYSEFLMTSAPKGTVLQEARL) lie on the Cytoplasmic side of the membrane.

It belongs to the CD36 family. Post-translationally, N-glycosylated. The six cysteines of the extracellular domain are all involved in intramolecular disulfide bonds.

The protein resides in the cell membrane. The protein localises to the membrane. It is found in the caveola. In terms of biological role, receptor for different ligands such as phospholipids, cholesterol ester, lipoproteins, phosphatidylserine and apoptotic cells. Receptor for HDL, mediating selective uptake of cholesteryl ether and HDL-dependent cholesterol efflux. Also facilitates the flux of free and esterified cholesterol between the cell surface and apoB-containing lipoproteins and modified lipoproteins, although less efficiently than HDL. May be involved in the phagocytosis of apoptotic cells, via its phosphatidylserine binding activity. This is Scavenger receptor class B member 1 (SCARB1) from Bos taurus (Bovine).